The chain runs to 832 residues: pre-rRNA 2'-O-ribose RNA methyltransferase FTSJ3 (832 aa).

Positions 56, 58, 76, 92, and 117 each coordinate S-adenosyl-L-methionine. Lysine 157 serves as the catalytic Proton acceptor. 3 disordered regions span residues 332-358, 485-523, and 546-631; these read INLS…ADEM, RLER…LEEK, and DADE…GLVE. Composition is skewed to basic and acidic residues over residues 345 to 358 and 485 to 495; these read EEEK…ADEM and RLERERREQGV. Residues 503-514 are compositionally biased toward acidic residues; sequence EEEEEEEEEEEN. Residues 570–579 show a composition bias toward basic residues; it reads KTKKKGQKKK. Positions 600 to 618 are enriched in acidic residues; it reads AEAEAEQSSDDDSSSDEEG. Positions 726-758 form a coiled coil; that stretch reads IKKVAEAKARKKRRMLKKMEQMKKKAEAVVSTV. Positions 795 to 832 are disordered; that stretch reads GPRVRRPPGVKGQFKVVDSRLKKDVRAQKRKEQKKRRK. The span at 811 to 821 shows a compositional bias: basic and acidic residues; sequence VDSRLKKDVRA. A compositionally biased stretch (basic residues) spans 822–832; that stretch reads QKRKEQKKRRK.

It belongs to the class I-like SAM-binding methyltransferase superfamily. RNA methyltransferase RlmE family. SPB1 subfamily. In terms of assembly, interacts with NIP7.

It is found in the nucleus. It localises to the nucleolus. The catalysed reaction is a ribonucleotide in rRNA + S-adenosyl-L-methionine = a 2'-O-methylribonucleotide in rRNA + S-adenosyl-L-homocysteine + H(+). In terms of biological role, RNA 2'-O-methyltransferase involved in the processing of the 34S pre-rRNA to 18S rRNA and in 40S ribosomal subunit formation. The protein is pre-rRNA 2'-O-ribose RNA methyltransferase FTSJ3 of Gallus gallus (Chicken).